The following is a 132-amino-acid chain: Small ribosomal subunit protein uS11 (132 aa).

Belongs to the universal ribosomal protein uS11 family. Part of the 30S ribosomal subunit. Interacts with proteins S7 and S18. Binds to IF-3.

Functionally, located on the platform of the 30S subunit, it bridges several disparate RNA helices of the 16S rRNA. Forms part of the Shine-Dalgarno cleft in the 70S ribosome. The sequence is that of Small ribosomal subunit protein uS11 from Alkaliphilus metalliredigens (strain QYMF).